A 223-amino-acid chain; its full sequence is Deoxyribose-phosphate aldolase (223 aa).

Asp89 (proton donor/acceptor) is an active-site residue. Residue Lys152 is the Schiff-base intermediate with acetaldehyde of the active site. Lys181 serves as the catalytic Proton donor/acceptor.

The protein belongs to the DeoC/FbaB aldolase family. DeoC type 1 subfamily.

The protein localises to the cytoplasm. It catalyses the reaction 2-deoxy-D-ribose 5-phosphate = D-glyceraldehyde 3-phosphate + acetaldehyde. It participates in carbohydrate degradation; 2-deoxy-D-ribose 1-phosphate degradation; D-glyceraldehyde 3-phosphate and acetaldehyde from 2-deoxy-alpha-D-ribose 1-phosphate: step 2/2. Its function is as follows. Catalyzes a reversible aldol reaction between acetaldehyde and D-glyceraldehyde 3-phosphate to generate 2-deoxy-D-ribose 5-phosphate. The polypeptide is Deoxyribose-phosphate aldolase (Listeria monocytogenes serotype 4a (strain HCC23)).